Consider the following 633-residue polypeptide: Probable methyltransferase PMT15 (633 aa).

The Cytoplasmic segment spans residues 1-24; sequence MGNYRWPSKLSKLSLRAKQTNLYR. The helical; Signal-anchor for type II membrane protein transmembrane segment at 25–45 threads the bilayer; sequence VILIAILCVTFYFVGVWQHSG. Topologically, residues 46–633 are lumenal; it reads RGISRSSISN…APAPDQSSDP (588 aa). 2 N-linked (GlcNAc...) asparagine glycosylation sites follow: Asn-113 and Asn-298.

This sequence belongs to the methyltransferase superfamily.

The protein localises to the golgi apparatus membrane. The protein is Probable methyltransferase PMT15 of Arabidopsis thaliana (Mouse-ear cress).